A 172-amino-acid chain; its full sequence is MEEYAREPCPWRIVDDCGGAFTMGVIGGGVFQAIKGFRNAPVGIRHRFRGSVNAVRIRAPQIGGSFAVWGGLFSTIDCGLVRLRGKEDPWNSISSGALTGAVLAARSGPLAMVGSAMMGGILLALIEGVGILLTRYTAQQFRNAPPFLEDPSQLTPKEGSPAPGYPNYQQYH.

A disulfide bridge links Cys-9 with Cys-78. The next 3 membrane-spanning stretches (helical) occupy residues 17–37, 61–77, and 113–133; these read CGGA…IKGF, QIGG…STID, and VGSA…GILL. The tract at residues 147 to 172 is disordered; the sequence is FLEDPSQLTPKEGSPAPGYPNYQQYH.

This sequence belongs to the Tim17/Tim22/Tim23 family. In terms of assembly, component of the TIM23 complex at least composed of TIMM23, TIMM17 (TIMM17A or TIMM17B) and TIMM50. The complex interacts with the TIMM44 component of the PAM complex. The complex also interacts with DNAJC15.

The protein localises to the mitochondrion inner membrane. In terms of biological role, essential component of the TIM23 complex, a complex that mediates the translocation of transit peptide-containing proteins across the mitochondrial inner membrane. The chain is Mitochondrial import inner membrane translocase subunit Tim17-B (Timm17b) from Mus musculus (Mouse).